The primary structure comprises 156 residues: 6,7-dimethyl-8-ribityllumazine synthase (156 aa).

Residues F22, 57–59 (AYE), and 81–83 (TVI) contribute to the 5-amino-6-(D-ribitylamino)uracil site. 86 to 87 (GT) is a (2S)-2-hydroxy-3-oxobutyl phosphate binding site. H89 functions as the Proton donor in the catalytic mechanism. F114 lines the 5-amino-6-(D-ribitylamino)uracil pocket. R128 is a (2S)-2-hydroxy-3-oxobutyl phosphate binding site.

Belongs to the DMRL synthase family. Forms an icosahedral capsid composed of 60 subunits, arranged as a dodecamer of pentamers.

It carries out the reaction (2S)-2-hydroxy-3-oxobutyl phosphate + 5-amino-6-(D-ribitylamino)uracil = 6,7-dimethyl-8-(1-D-ribityl)lumazine + phosphate + 2 H2O + H(+). Its pathway is cofactor biosynthesis; riboflavin biosynthesis; riboflavin from 2-hydroxy-3-oxobutyl phosphate and 5-amino-6-(D-ribitylamino)uracil: step 1/2. Functionally, catalyzes the formation of 6,7-dimethyl-8-ribityllumazine by condensation of 5-amino-6-(D-ribitylamino)uracil with 3,4-dihydroxy-2-butanone 4-phosphate. This is the penultimate step in the biosynthesis of riboflavin. This Yersinia pseudotuberculosis serotype O:1b (strain IP 31758) protein is 6,7-dimethyl-8-ribityllumazine synthase.